Consider the following 266-residue polypeptide: Undecaprenyl-diphosphatase (266 aa).

8 helical membrane passes run 1–21 (MDTF…FLPI), 39–59 (QGLS…VMYF), 87–107 (WWII…KDFI), 111–131 (FRSI…LWWA), 144–164 (VGWK…IPGT), 183–203 (AAAR…AILV), 218–238 (ALGL…HYFL), and 246–266 (MTPF…IIFL).

The protein belongs to the UppP family.

The protein localises to the cell inner membrane. The catalysed reaction is di-trans,octa-cis-undecaprenyl diphosphate + H2O = di-trans,octa-cis-undecaprenyl phosphate + phosphate + H(+). Functionally, catalyzes the dephosphorylation of undecaprenyl diphosphate (UPP). Confers resistance to bacitracin. In Shewanella pealeana (strain ATCC 700345 / ANG-SQ1), this protein is Undecaprenyl-diphosphatase.